The primary structure comprises 341 residues: tRNA N6-adenosine threonylcarbamoyltransferase (341 aa).

The Fe cation site is built by histidine 111 and histidine 115. Substrate contacts are provided by residues 134–138 (LVSGG), aspartate 167, glycine 180, and asparagine 270. Residue aspartate 298 participates in Fe cation binding.

The protein belongs to the KAE1 / TsaD family. It depends on Fe(2+) as a cofactor.

The protein localises to the cytoplasm. The enzyme catalyses L-threonylcarbamoyladenylate + adenosine(37) in tRNA = N(6)-L-threonylcarbamoyladenosine(37) in tRNA + AMP + H(+). Required for the formation of a threonylcarbamoyl group on adenosine at position 37 (t(6)A37) in tRNAs that read codons beginning with adenine. Is involved in the transfer of the threonylcarbamoyl moiety of threonylcarbamoyl-AMP (TC-AMP) to the N6 group of A37, together with TsaE and TsaB. TsaD likely plays a direct catalytic role in this reaction. This chain is tRNA N6-adenosine threonylcarbamoyltransferase, found in Thiobacillus denitrificans (strain ATCC 25259 / T1).